The chain runs to 219 residues: Uracil-DNA glycosylase (219 aa).

The active-site Proton acceptor is aspartate 61.

Belongs to the uracil-DNA glycosylase (UDG) superfamily. UNG family.

It is found in the cytoplasm. It carries out the reaction Hydrolyzes single-stranded DNA or mismatched double-stranded DNA and polynucleotides, releasing free uracil.. Its function is as follows. Excises uracil residues from the DNA which can arise as a result of misincorporation of dUMP residues by DNA polymerase or due to deamination of cytosine. This chain is Uracil-DNA glycosylase, found in Haemophilus influenzae (strain PittEE).